A 264-amino-acid polypeptide reads, in one-letter code: 3-methyl-2-oxobutanoate hydroxymethyltransferase (264 aa).

Mg(2+) contacts are provided by aspartate 45 and aspartate 84. 3-methyl-2-oxobutanoate-binding positions include 45-46 (DS), aspartate 84, and lysine 112. A Mg(2+)-binding site is contributed by glutamate 114. Glutamate 181 acts as the Proton acceptor in catalysis.

This sequence belongs to the PanB family. Homodecamer; pentamer of dimers. Mg(2+) serves as cofactor.

The protein resides in the cytoplasm. It catalyses the reaction 3-methyl-2-oxobutanoate + (6R)-5,10-methylene-5,6,7,8-tetrahydrofolate + H2O = 2-dehydropantoate + (6S)-5,6,7,8-tetrahydrofolate. It participates in cofactor biosynthesis; (R)-pantothenate biosynthesis; (R)-pantoate from 3-methyl-2-oxobutanoate: step 1/2. Its function is as follows. Catalyzes the reversible reaction in which hydroxymethyl group from 5,10-methylenetetrahydrofolate is transferred onto alpha-ketoisovalerate to form ketopantoate. The polypeptide is 3-methyl-2-oxobutanoate hydroxymethyltransferase (Shewanella pealeana (strain ATCC 700345 / ANG-SQ1)).